The chain runs to 893 residues: Protein bride of sevenless (893 aa).

Residues 1–30 form the signal peptide; that stretch reads MSGLQLIWKSPTQLVLFVLLITISCIDLCH. Residues 32–530 lie on the Extracellular side of the membrane; sequence VGAATPTKKS…RIKLDTWVAT (499 aa). 2 disordered regions span residues 36 to 66 and 82 to 102; these read TPTK…NEGS and GTAS…SSTT. Polar residues predominate over residues 50-66; sequence QPVSSTTTAIPTTNEGS. Residues asparagine 183, asparagine 307, asparagine 328, asparagine 471, and asparagine 482 are each glycosylated (N-linked (GlcNAc...) asparagine). Helical transmembrane passes span 531–551, 563–583, 607–627, 630–650, 653–673, 692–712, 722–742, and 752–772; these read GLTA…FIVV, PVTS…FVPF, LCGV…SLLL, AVML…NGYI, IICV…LVVM, WGLL…VPFI, GILI…WIAL, and AAIP…ILIP. Over 773-893 the chain is Cytoplasmic; the sequence is RTFLIVRGIE…SPDHSKITRF (121 aa). A disordered region spans residues 858 to 893; that stretch reads ANINPQRPPPHPQQSPSRSSVCSLPPSPDHSKITRF.

Belongs to the G-protein coupled receptor 3 family.

It is found in the cell membrane. Its function is as follows. Acts as a ligand for sevenless tyrosine-kinase receptor during eye development. This Drosophila virilis (Fruit fly) protein is Protein bride of sevenless (boss).